We begin with the raw amino-acid sequence, 363 residues long: Type 3 secretion system translocon protein SctB (363 aa).

Residues 99-120 traverse the membrane as a helical segment; the sequence is ISSLSSNAVSLIISVAVLLSAL.

This sequence belongs to the SctB/SipC family. The core secretion machinery of the T3SS is composed of approximately 20 different proteins, including cytoplasmic components, a base, an export apparatus and a needle. This subunit is involved in the formation of a pore, called the translocon, in host membrane.

The protein resides in the secreted. The protein localises to the host membrane. Component of the type III secretion system (T3SS), also called injectisome, which is used to inject bacterial effector proteins into eukaryotic host cells. IpaB/SctE and IpaC/SctB are inserted into the host membrane where they form a pore and allow the translocation of effector proteins into the cytosol of target cells. The polypeptide is Type 3 secretion system translocon protein SctB (Shigella dysenteriae).